The following is a 406-amino-acid chain: Tyrosine--tRNA ligase (406 aa).

Position 34 (Tyr34) interacts with L-tyrosine. Positions 39-48 match the 'HIGH' region motif; that stretch reads PTADSLHVGH. L-tyrosine contacts are provided by Tyr167 and Gln171. A 'KMSKS' region motif is present at residues 227 to 231; that stretch reads KMGKT. Residue Lys230 participates in ATP binding. Residues 339–404 form the S4 RNA-binding domain; the sequence is RKIVDVLFEA…GKKEYHRLLV (66 aa).

It belongs to the class-I aminoacyl-tRNA synthetase family. TyrS type 1 subfamily. Homodimer.

It localises to the cytoplasm. It carries out the reaction tRNA(Tyr) + L-tyrosine + ATP = L-tyrosyl-tRNA(Tyr) + AMP + diphosphate + H(+). Catalyzes the attachment of tyrosine to tRNA(Tyr) in a two-step reaction: tyrosine is first activated by ATP to form Tyr-AMP and then transferred to the acceptor end of tRNA(Tyr). The polypeptide is Tyrosine--tRNA ligase (Caldanaerobacter subterraneus subsp. tengcongensis (strain DSM 15242 / JCM 11007 / NBRC 100824 / MB4) (Thermoanaerobacter tengcongensis)).